Reading from the N-terminus, the 327-residue chain is Inactive peptidyl-prolyl cis-trans isomerase FKBP6 (327 aa).

The disordered stretch occupies residues 1–20; that stretch reads MSVFSRLRNGIPPSRDDCQS. Residues 54–143 enclose the PPIase FKBP-type domain; the sequence is DASVLVKYSG…LFEIELIDFL (90 aa). 3 TPR repeats span residues 171-204, 219-252, and 253-286; these read AATEREFGNYLFRQNRFCDAKVRYKRALLLLHRR, LLVLLNLSFVYLKLDRPAMALRYGEQALLIDKRN, and AKALFRCGQACLLLTEYEQARDFLVRAQKEQPCN.

The protein belongs to the FKBP6 family. In terms of assembly, interacts with HSP72/HSPA2 and CLTC. Interacts with GAPDH; leading to inhibit GAPDH catalytic activity. Interacts (via TPR repeats) with HSP90.

It localises to the cytoplasm. It is found in the cytosol. The protein resides in the nucleus. The protein localises to the chromosome. In terms of biological role, co-chaperone required during spermatogenesis to repress transposable elements and prevent their mobilization, which is essential for the germline integrity. Acts via the piRNA metabolic process, which mediates the repression of transposable elements during meiosis by forming complexes composed of piRNAs and Piwi proteins and govern the methylation and subsequent repression of transposons. Acts as a co-chaperone via its interaction with HSP90 and is required for the piRNA amplification process, the secondary piRNA biogenesis. May be required together with HSP90 in removal of 16 nucleotide ping-pong by-products from Piwi complexes, possibly facilitating turnover of Piwi complexes. The sequence is that of Inactive peptidyl-prolyl cis-trans isomerase FKBP6 (Fkbp6) from Rattus norvegicus (Rat).